Consider the following 339-residue polypeptide: Small ribosomal subunit biogenesis GTPase RsgA (339 aa).

The region spanning methionine 111–phenylalanine 271 is the CP-type G domain. GTP-binding positions include asparagine 159–aspartate 162 and glycine 213–serine 221. Zn(2+) is bound by residues cysteine 295, cysteine 300, histidine 302, and cysteine 308.

The protein belongs to the TRAFAC class YlqF/YawG GTPase family. RsgA subfamily. Monomer. Associates with 30S ribosomal subunit, binds 16S rRNA. It depends on Zn(2+) as a cofactor.

It localises to the cytoplasm. One of several proteins that assist in the late maturation steps of the functional core of the 30S ribosomal subunit. Helps release RbfA from mature subunits. May play a role in the assembly of ribosomal proteins into the subunit. Circularly permuted GTPase that catalyzes slow GTP hydrolysis, GTPase activity is stimulated by the 30S ribosomal subunit. The chain is Small ribosomal subunit biogenesis GTPase RsgA from Pseudomonas aeruginosa (strain LESB58).